We begin with the raw amino-acid sequence, 858 residues long: DNA replication licensing factor mcm4-A (858 aa).

The segment at 1 to 125 (MSSPTSTPSR…ARKVKQVDLH (125 aa)) is disordered. 2 stretches are compositionally biased toward polar residues: residues 54-68 (SPSGDIQSPLFSSPA) and 79-94 (LDLSSPLTYGTPSSRV). The C4-type zinc-finger motif lies at 301–326 (CQVCAFTTRVEIDRGRIAEPSVCKHC). The MCM domain maps to 453 to 662 (IYERLAAALA…YDRRLAHHLV (210 aa)). Tyrosine 466, arginine 492, lysine 511, serine 512, asparagine 613, arginine 638, arginine 727, and glutamate 730 together coordinate ATP. The Arginine finger signature appears at 637 to 640 (SRFD).

It belongs to the MCM family. As to quaternary structure, component of the mcm2-7 complex (RLF-M). The complex forms a toroidal hexameric ring with the proposed subunit order mcm2-mcm6-mcm4-mcm7-mcm3-mcm5. The heterodimer of mmcm3/mcm5 interacts with mcm4, mmcm6, mcm7 and weakly with mcm2. Component of the CMG helicase complex, composed of the mcm2-7 complex, the GINS complex and cdc45. Hyperphosphorylated during mitosis in a mechanism requiring cdc2-cyclin B and other kinases. Undergoes dephosphorylation after exiting mitosis, existing in a partially phosphorylated state in the cytosolic interphase mcm complex which associates with the pre-replication complexes (pre-Rcs). Complete dephosphorylation inactivates the mcm complex, preventing its binding to chromatin. Becomes actively phosphorylated during S phase once the mcm complex is assembled on the chromatin. This chromatin-associated phosphorylation occurs during the activation of the pre-Rcs and is independent of cdks. Phosphorylated by the cdc7-dbf4b complex.

It localises to the nucleus. It is found in the chromosome. The catalysed reaction is ATP + H2O = ADP + phosphate + H(+). In terms of biological role, acts as a component of the MCM2-7 complex (MCM complex) which is the replicative helicase essential for 'once per cell cycle' DNA replication initiation and elongation in eukaryotic cells. Core component of CDC45-MCM-GINS (CMG) helicase, the molecular machine that unwinds template DNA during replication, and around which the replisome is built. The active ATPase sites in the MCM2-7 ring are formed through the interaction surfaces of two neighboring subunits such that a critical structure of a conserved arginine finger motif is provided in trans relative to the ATP-binding site of the Walker A box of the adjacent subunit. The six ATPase active sites, however, are likely to contribute differentially to the complex helicase activity. The sequence is that of DNA replication licensing factor mcm4-A (mcm4-a) from Xenopus laevis (African clawed frog).